The following is a 2534-amino-acid chain: Highly reducing polyketide synthase easB (2534 aa).

The segment at 1–49 is disordered; the sequence is MSPASRSRVEIADSESDSERLSSSPWSILSDNDSNTSDERSTRAGPGSL. Residues 49-470 form the Ketosynthase family 3 (KS3) domain; sequence LEPIAVIGIG…GTNAHVIIDA (422 aa). Catalysis depends on for beta-ketoacyl synthase activity residues Cys222, His356, and His396. The malonyl-CoA:ACP transacylase (MAT) domain stretch occupies residues 587-885; sequence IFSGQGAQYA…LSGPVNQILK (299 aa). Residues 973–1111 form an N-terminal hotdog fold region; sequence HELLGTLSAD…GLVQAEVDSV (139 aa). The segment at 973–1273 is dehydratase (DH) domain; that stretch reads HELLGTLSAD…QGIRVTSLGG (301 aa). In terms of domain architecture, PKS/mFAS DH spans 973–1277; that stretch reads HELLGTLSAD…VTSLGGDVAA (305 aa). His1005 (proton acceptor; for dehydratase activity) is an active-site residue. Positions 1131–1277 are C-terminal hotdog fold; it reads THGTIPQKFY…VTSLGGDVAA (147 aa). Asp1193 (proton donor; for dehydratase activity) is an active-site residue. Positions 1395–1625 are methyltransferase (CMet) domain; the sequence is KTSALSLLTK…VFISTAPFPR (231 aa). The interval 1834-2146 is enoyl reductase (ER) domain; the sequence is GLLETIRWKD…AGKHTGKIVL (313 aa). The Carrier domain maps to 2452-2529; the sequence is EAVHIVTNAI…QLAAIVAKES (78 aa). The ketoreductase (KR) domain stretch occupies residues 2453-2526; sequence AVHIVTNAIL…SISQLAAIVA (74 aa). Position 2489 is an O-(pantetheine 4'-phosphoryl)serine (Ser2489).

It functions in the pathway antibiotic biosynthesis. Functionally, polyketide synthase; part of the gene cluster that mediates the biosynthesis of emericellamides, secondary metabolites acting as antibiotics. The biosynthesis of emericellamides initiates from the highly reducing polyketide synthase easB which catalyzes the formation of the linear polyketide chain. EasB produces several polyketides that can be further processed by the downstream enzymes. The polyketides are released from easB as linear polyketide carboxylic acids, which are converted to CoA thioesters by the acyl-CoA ligase easD. The substrates are then loaded onto the acyltransferase easC, which shuttles them to the first thiolation (T) domain of the nonribosomal peptide synthetase easA. EasA then performs condensation of the polyketides with one glycine, two alanine, one valine and one leucine residues. A last step of cyclization leads to the production of emericellamides. This chain is Highly reducing polyketide synthase easB, found in Emericella nidulans (strain FGSC A4 / ATCC 38163 / CBS 112.46 / NRRL 194 / M139) (Aspergillus nidulans).